The primary structure comprises 189 residues: Apolipoprotein D (189 aa).

The signal sequence occupies residues 1 to 20 (MVPVLLLLPALAGLFGAAEG). Q21 carries the post-translational modification Pyrrolidone carboxylic acid. 2 disulfide bridges follow: C28–C134 and C61–C185. N65 and N98 each carry an N-linked (GlcNAc...) asparagine glycan.

Belongs to the calycin superfamily. Lipocalin family. In terms of assembly, homodimer.

The protein localises to the secreted. Functionally, APOD occurs in the macromolecular complex with lecithin-transport and binding of bilin. Appears to be able to transport a variety of ligands in a number of different contexts. The polypeptide is Apolipoprotein D (APOD) (Bos taurus (Bovine)).